Consider the following 356-residue polypeptide: Phosphotriesterase-related protein (356 aa).

The a divalent metal cation site is built by His-23, His-25, Glu-175, His-207, His-236, and Asp-304.

It belongs to the metallo-dependent hydrolases superfamily. Phosphotriesterase family. A divalent metal cation is required as a cofactor.

The protein is Phosphotriesterase-related protein of Aedes aegypti (Yellowfever mosquito).